A 273-amino-acid polypeptide reads, in one-letter code: Shikimate dehydrogenase (NADP(+)) (273 aa).

Residues 14–16 (SKS) and T61 each bind shikimate. The active-site Proton acceptor is K65. Shikimate is bound by residues N86 and D102. Residues 126-130 (GAGGA), 150-155 (NRTVAK), and M213 each bind NADP(+). Y215 provides a ligand contact to shikimate. G237 is a binding site for NADP(+).

This sequence belongs to the shikimate dehydrogenase family. In terms of assembly, homodimer.

It carries out the reaction shikimate + NADP(+) = 3-dehydroshikimate + NADPH + H(+). Its pathway is metabolic intermediate biosynthesis; chorismate biosynthesis; chorismate from D-erythrose 4-phosphate and phosphoenolpyruvate: step 4/7. Functionally, involved in the biosynthesis of the chorismate, which leads to the biosynthesis of aromatic amino acids. Catalyzes the reversible NADPH linked reduction of 3-dehydroshikimate (DHSA) to yield shikimate (SA). The chain is Shikimate dehydrogenase (NADP(+)) from Tolumonas auensis (strain DSM 9187 / NBRC 110442 / TA 4).